Reading from the N-terminus, the 174-residue chain is Shikimate kinase 2 (174 aa).

12–17 contacts ATP; that stretch reads GAGKTT. T16 and D32 together coordinate Mg(2+). Substrate-binding residues include D34, R58, and G79. The tract at residues 112–126 is LID domain; the sequence is AEDPEEAQRPSLTGK. Position 120 (R120) interacts with ATP. Position 139 (R139) interacts with substrate. Position 155 (Q155) interacts with ATP.

Belongs to the shikimate kinase family. AroL subfamily. Monomer. The cofactor is Mg(2+).

It is found in the cytoplasm. It catalyses the reaction shikimate + ATP = 3-phosphoshikimate + ADP + H(+). Its pathway is metabolic intermediate biosynthesis; chorismate biosynthesis; chorismate from D-erythrose 4-phosphate and phosphoenolpyruvate: step 5/7. Catalyzes the specific phosphorylation of the 3-hydroxyl group of shikimic acid using ATP as a cosubstrate. The chain is Shikimate kinase 2 from Yersinia pestis bv. Antiqua (strain Antiqua).